A 643-amino-acid chain; its full sequence is Ecto-NOX disulfide-thiol exchanger 1 (643 aa).

The RRM domain maps to 142-221 (KTVFVGGLPE…GRLHVDFAQA (80 aa)). Coiled coils occupy residues 307-342 (VQSANSHVRRLMNEKATHEQEMEEAKENFKNALTGI) and 425-570 (QAYA…EALL).

Belongs to the ENOX family. It depends on Cu cation as a cofactor. Expressed in lymphocyte cells, breast and breast cancer (at protein level). Found in the sera of cancer patients with a wide variety of cancers including breast, prostate, lung and ovarian cancers, leukemias, and lymphomas. Found also in the serum of healthy volunteers or patients with disorders other than cancer. Probably shed into serum by cancer cells.

The protein localises to the cell membrane. It localises to the secreted. The protein resides in the extracellular space. Not inhibited by the antitumor sulfonylurea LY181984, the vabilloid capsaicin, and retinoids. Functionally, probably acts as a terminal oxidase of plasma electron transport from cytosolic NAD(P)H via hydroquinones to acceptors at the cell surface. Hydroquinone oxidase activity alternates with a protein disulfide-thiol interchange/oxidoreductase activity which may control physical membrane displacements associated with vesicle budding or cell enlargement. The activities oscillate with a period length of 24 minutes and play a role in control of the ultradian cellular biological clock. The chain is Ecto-NOX disulfide-thiol exchanger 1 (ENOX1) from Homo sapiens (Human).